The sequence spans 514 residues: Peptide chain release factor 3 (514 aa).

The 261-residue stretch at 8–268 (KKRRTFAIIS…TFLEFAPEPH (261 aa)) folds into the tr-type G domain. Residues 17–24 (SHPDAGKT), 85–89 (DTPGH), and 139–142 (NKLD) each bind GTP.

Belongs to the TRAFAC class translation factor GTPase superfamily. Classic translation factor GTPase family. PrfC subfamily.

The protein localises to the cytoplasm. In terms of biological role, increases the formation of ribosomal termination complexes and stimulates activities of RF-1 and RF-2. It binds guanine nucleotides and has strong preference for UGA stop codons. It may interact directly with the ribosome. The stimulation of RF-1 and RF-2 is significantly reduced by GTP and GDP, but not by GMP. This Streptococcus agalactiae serotype Ia (strain ATCC 27591 / A909 / CDC SS700) protein is Peptide chain release factor 3.